The chain runs to 207 residues: Crossover junction endodeoxyribonuclease RuvC (207 aa).

Residues Asp-11, Glu-71, and Asp-143 contribute to the active site. Asp-11, Glu-71, and Asp-143 together coordinate Mg(2+).

This sequence belongs to the RuvC family. Homodimer which binds Holliday junction (HJ) DNA. The HJ becomes 2-fold symmetrical on binding to RuvC with unstacked arms; it has a different conformation from HJ DNA in complex with RuvA. In the full resolvosome a probable DNA-RuvA(4)-RuvB(12)-RuvC(2) complex forms which resolves the HJ. Requires Mg(2+) as cofactor.

Its subcellular location is the cytoplasm. It catalyses the reaction Endonucleolytic cleavage at a junction such as a reciprocal single-stranded crossover between two homologous DNA duplexes (Holliday junction).. In terms of biological role, the RuvA-RuvB-RuvC complex processes Holliday junction (HJ) DNA during genetic recombination and DNA repair. Endonuclease that resolves HJ intermediates. Cleaves cruciform DNA by making single-stranded nicks across the HJ at symmetrical positions within the homologous arms, yielding a 5'-phosphate and a 3'-hydroxyl group; requires a central core of homology in the junction. The consensus cleavage sequence is 5'-(A/T)TT(C/G)-3'. Cleavage occurs on the 3'-side of the TT dinucleotide at the point of strand exchange. HJ branch migration catalyzed by RuvA-RuvB allows RuvC to scan DNA until it finds its consensus sequence, where it cleaves and resolves the cruciform DNA. The chain is Crossover junction endodeoxyribonuclease RuvC from Methylobacterium radiotolerans (strain ATCC 27329 / DSM 1819 / JCM 2831 / NBRC 15690 / NCIMB 10815 / 0-1).